The following is a 1199-amino-acid chain: Ecdysone-induced protein 75B, isoforms C/D (1199 aa).

The disordered stretch occupies residues Thr130–Val182. 2 stretches are compositionally biased toward low complexity: residues Gln139–Gln149 and Glu162–His172. The segment at residues Thr242–Phe318 is a DNA-binding region (nuclear receptor). 2 consecutive NR C4-type zinc fingers follow at residues Cys245 to Cys265 and Cys282 to Cys306. The 249-residue stretch at Asp352–Asn600 folds into the NR LBD domain. 6 disordered regions span residues Lys624–Ala665, Leu771–Asp808, Val831–Ile851, Ala895–Ser961, Glu991–Ala1104, and Val1155–Leu1188. Composition is skewed to low complexity over residues Gly641–Leu653, Ser792–Ser804, Val831–Ser845, Ala897–Gln942, and Ser950–Ser961. Polar residues-rich tracts occupy residues Ser993 to Arg1006 and Ala1018 to Gln1040. Composition is skewed to low complexity over residues Ser1041–Ser1077, Ser1086–Ala1104, and Ala1159–Gly1187.

This sequence belongs to the nuclear hormone receptor family. NR1 subfamily.

It localises to the nucleus. In terms of biological role, implicated in the regulation of ecdysone-triggered gene hierarchies. Probably plays a key role in mediating the regulation of the larval molt by 20-OH-ecdysone. This chain is Ecdysone-induced protein 75B, isoforms C/D (Eip75B), found in Drosophila melanogaster (Fruit fly).